The primary structure comprises 264 residues: Thymidylate synthase (264 aa).

Position 21 (arginine 21) interacts with dUMP. Histidine 51 is a (6R)-5,10-methylene-5,6,7,8-tetrahydrofolate binding site. 126 to 127 contributes to the dUMP binding site; the sequence is RR. The active-site Nucleophile is the cysteine 146. DUMP is bound by residues 166-169, asparagine 177, and 207-209; these read RSAD and HLY. Residue aspartate 169 participates in (6R)-5,10-methylene-5,6,7,8-tetrahydrofolate binding. Alanine 263 serves as a coordination point for (6R)-5,10-methylene-5,6,7,8-tetrahydrofolate.

Belongs to the thymidylate synthase family. Bacterial-type ThyA subfamily. As to quaternary structure, homodimer.

Its subcellular location is the cytoplasm. It carries out the reaction dUMP + (6R)-5,10-methylene-5,6,7,8-tetrahydrofolate = 7,8-dihydrofolate + dTMP. It participates in pyrimidine metabolism; dTTP biosynthesis. Functionally, catalyzes the reductive methylation of 2'-deoxyuridine-5'-monophosphate (dUMP) to 2'-deoxythymidine-5'-monophosphate (dTMP) while utilizing 5,10-methylenetetrahydrofolate (mTHF) as the methyl donor and reductant in the reaction, yielding dihydrofolate (DHF) as a by-product. This enzymatic reaction provides an intracellular de novo source of dTMP, an essential precursor for DNA biosynthesis. The polypeptide is Thymidylate synthase (Stutzerimonas stutzeri (strain A1501) (Pseudomonas stutzeri)).